Consider the following 232-residue polypeptide: MKIGIIGAMEQEVTILKEQLTDCETHHKAGCIFYTGNLNGADVVLLQSGIGKVAAAVGTAVLLEAFQPDAVLNTGSAGGFDSSLTLGDVVISTEVRYHDADVTAFGYEIGQMAQQPAAFISDEKLILTAEQALASMADMHAVRGLICTGDAFVCTPEKQAFIRDNFPTVIAVEMEAAAIAQACHQFNVPFVVVRAISDVADKESPMSFEEFLPLAAQSSSVMVAKMVEILNQ.

Glu-12 functions as the Proton acceptor in the catalytic mechanism. Residues Gly-78, Val-153, and 174-175 contribute to the substrate site; that span reads ME. Asp-198 serves as the catalytic Proton donor.

The protein belongs to the PNP/UDP phosphorylase family. MtnN subfamily.

It carries out the reaction S-adenosyl-L-homocysteine + H2O = S-(5-deoxy-D-ribos-5-yl)-L-homocysteine + adenine. The catalysed reaction is S-methyl-5'-thioadenosine + H2O = 5-(methylsulfanyl)-D-ribose + adenine. The enzyme catalyses 5'-deoxyadenosine + H2O = 5-deoxy-D-ribose + adenine. It functions in the pathway amino-acid biosynthesis; L-methionine biosynthesis via salvage pathway; S-methyl-5-thio-alpha-D-ribose 1-phosphate from S-methyl-5'-thioadenosine (hydrolase route): step 1/2. Its function is as follows. Catalyzes the irreversible cleavage of the glycosidic bond in both 5'-methylthioadenosine (MTA) and S-adenosylhomocysteine (SAH/AdoHcy) to adenine and the corresponding thioribose, 5'-methylthioribose and S-ribosylhomocysteine, respectively. Also cleaves 5'-deoxyadenosine, a toxic by-product of radical S-adenosylmethionine (SAM) enzymes, into 5-deoxyribose and adenine. In Photobacterium profundum (strain SS9), this protein is 5'-methylthioadenosine/S-adenosylhomocysteine nucleosidase.